Here is a 768-residue protein sequence, read N- to C-terminus: MKLGKWSVLLLVGCTAAIDIPRKPFPPTGSGHKRLTFNETVVKPVIAPSSTAVEWISTAEDGDYVFQDSDGSLKIQSIVTNHTQTLVPADKVPDDAYSYWIHPNLSSVLWATNYTKQYRYSYFASYYIQDLQSFKLAPLASNQAGDIQYANWSPTGDAIAFVRANNVYVWTAKSTTQITTDGSADLFNGVPDWIYEEEILGDRHALWFSPDAEYLAFLRFNETGVPTFRVPYYMDNEEVAPPYPRELELRYPKVSQTNPTVEVRLLSRATGEVSSVSIKAFNATDLVIGEVAWLTETHSQVAVKAFNRVQDQQKVVTVDVLSLKTKTISERDGTDGWLDNALSITYIGQIGDSKAEYYIDISDESGWAHLWLFPVAGGRPMALTKGEWEVTAILSIDKQRQLVYYLSTQHHSTERHVYSVSWKTFTATPLVDDTVAAVWSASFSSQGGYYILSYRGPDVPYQELYAINSTKPLCTITSNAAVYDVLKQYTLPKISYFELRLPSGETLNVMQRLPVSFSPRKKYPILFTPYGGPGAQEVSKAWQSQTFKSYIASDPELEFVTWTVDNRGTGYKGRRFRGQVAKQLGRLEAQDQVWAAQQAAKLPFIDAEHIAIWGWSYGGYLTGKVIETDSGVFSLGVLTAPVSDWRFYDSMYTERYMKTLQENANGYNASAIWDVAGYKNVRGGVLIQHGTGDDNVHFQNAAALVDRLVGEGVSPDKLQVQWFTDSDHGIRYHGGSVFLYRQLAKRLYEEKHRKKSEGHQWSKRSLEF.

Residues Met1–Ala17 form the signal peptide. Asn38, Asn81, Asn104, Asn113, Asn221, Asn282, and Asn468 each carry an N-linked (GlcNAc...) asparagine glycan. Ser616 (charge relay system) is an active-site residue. N-linked (GlcNAc...) asparagine glycosylation occurs at Asn668. Residues Asp693 and His728 each act as charge relay system in the active site.

Belongs to the peptidase S9B family.

The protein localises to the secreted. The catalysed reaction is Release of an N-terminal dipeptide, Xaa-Yaa-|-Zaa-, from a polypeptide, preferentially when Yaa is Pro, provided Zaa is neither Pro nor hydroxyproline.. Extracellular dipeptidyl-peptidase which removes N-terminal dipeptides sequentially from polypeptides having unsubstituted N-termini provided that the penultimate residue is proline. This is Probable dipeptidyl peptidase 4 (dpp4) from Aspergillus clavatus (strain ATCC 1007 / CBS 513.65 / DSM 816 / NCTC 3887 / NRRL 1 / QM 1276 / 107).